A 465-amino-acid polypeptide reads, in one-letter code: Cysteine--tRNA ligase (465 aa).

C30 contacts Zn(2+). Positions 32 to 42 match the 'HIGH' region motif; it reads ITVYDYCHVGH. The Zn(2+) site is built by C214, H239, and E243. Residues 271 to 275 carry the 'KMSKS' region motif; that stretch reads KMSKS. K274 is a binding site for ATP.

This sequence belongs to the class-I aminoacyl-tRNA synthetase family. In terms of assembly, monomer. It depends on Zn(2+) as a cofactor.

The protein resides in the cytoplasm. The catalysed reaction is tRNA(Cys) + L-cysteine + ATP = L-cysteinyl-tRNA(Cys) + AMP + diphosphate. This is Cysteine--tRNA ligase from Burkholderia ambifaria (strain MC40-6).